The following is a 267-amino-acid chain: L-aspartate dehydrogenase (267 aa).

NAD(+)-binding residues include alanine 124 and asparagine 190. Histidine 218 is an active-site residue.

This sequence belongs to the L-aspartate dehydrogenase family.

It carries out the reaction L-aspartate + NADP(+) + H2O = oxaloacetate + NH4(+) + NADPH + H(+). The catalysed reaction is L-aspartate + NAD(+) + H2O = oxaloacetate + NH4(+) + NADH + H(+). Its pathway is cofactor biosynthesis; NAD(+) biosynthesis; iminoaspartate from L-aspartate (dehydrogenase route): step 1/1. In terms of biological role, specifically catalyzes the NAD or NADP-dependent dehydrogenation of L-aspartate to iminoaspartate. The polypeptide is L-aspartate dehydrogenase (Methanococcus maripaludis (strain DSM 14266 / JCM 13030 / NBRC 101832 / S2 / LL)).